The chain runs to 247 residues: Cytochrome c oxidase subunit 2 (247 aa).

A signal peptide spans 1–11; sequence MLLIINNIINN. The Mitochondrial intermembrane portion of the chain corresponds to 12–38; sequence DVPTPWGVYFQDSATPNHEGIIELHDN. A helical membrane pass occupies residues 39–59; the sequence is IMFYLVLILCLVSWLLFSIVK. At 60–78 the chain is on the mitochondrial matrix side; sequence DGSKNPLPHKYLVHGQTIE. A helical membrane pass occupies residues 79–101; sequence IIWTILPALVLLVIAFPSFILLY. At 102 to 247 the chain is on the mitochondrial intermembrane side; sequence LCDEVISPAM…KEFLTWLNEQ (146 aa). Cu cation is bound by residues His182, Cys217, Glu219, Cys221, His225, and Met228. Glu219 provides a ligand contact to Mg(2+).

The protein belongs to the cytochrome c oxidase subunit 2 family. Component of the cytochrome c oxidase (complex IV, CIV), a multisubunit enzyme composed of a catalytic core of 3 subunits and several supernumerary subunits. The complex exists as a monomer or a dimer and forms supercomplexes (SCs) in the inner mitochondrial membrane with ubiquinol-cytochrome c oxidoreductase (cytochrome b-c1 complex, complex III, CIII). Cu cation is required as a cofactor. In terms of processing, the signal sequence of COX2 is processed by IMP1.

It localises to the mitochondrion inner membrane. The enzyme catalyses 4 Fe(II)-[cytochrome c] + O2 + 8 H(+)(in) = 4 Fe(III)-[cytochrome c] + 2 H2O + 4 H(+)(out). In terms of biological role, component of the cytochrome c oxidase, the last enzyme in the mitochondrial electron transport chain which drives oxidative phosphorylation. The respiratory chain contains 3 multisubunit complexes succinate dehydrogenase (complex II, CII), ubiquinol-cytochrome c oxidoreductase (cytochrome b-c1 complex, complex III, CIII) and cytochrome c oxidase (complex IV, CIV), that cooperate to transfer electrons derived from NADH and succinate to molecular oxygen, creating an electrochemical gradient over the inner membrane that drives transmembrane transport and the ATP synthase. Cytochrome c oxidase is the component of the respiratory chain that catalyzes the reduction of oxygen to water. Electrons originating from reduced cytochrome c in the intermembrane space (IMS) are transferred via the dinuclear copper A center (CU(A)) of subunit 2 and heme A of subunit 1 to the active site in subunit 1, a binuclear center (BNC) formed by heme A3 and copper B (CU(B)). The BNC reduces molecular oxygen to 2 water molecules using 4 electrons from cytochrome c in the IMS and 4 protons from the mitochondrial matrix. This Wickerhamomyces canadensis (Yeast) protein is Cytochrome c oxidase subunit 2 (COX2).